A 188-amino-acid polypeptide reads, in one-letter code: UPF0397 protein LACR_0367 (188 aa).

Helical transmembrane passes span Ile14 to Ile34, Ala48 to Ile68, Ala80 to Val100, Ile120 to Leu140, and Gln152 to Leu172.

It belongs to the UPF0397 family.

It is found in the cell membrane. The protein is UPF0397 protein LACR_0367 of Lactococcus lactis subsp. cremoris (strain SK11).